A 239-amino-acid polypeptide reads, in one-letter code: Small ribosomal subunit protein uS2 (239 aa).

This sequence belongs to the universal ribosomal protein uS2 family.

The protein is Small ribosomal subunit protein uS2 of Francisella tularensis subsp. tularensis (strain FSC 198).